Consider the following 454-residue polypeptide: CBL-interacting protein kinase 33 (454 aa).

The region spanning 13–268 is the Protein kinase domain; the sequence is YELGRTIGEG…IPEILEDEWF (256 aa). ATP is bound by residues 19–27 and lysine 42; that span reads IGEGTFAKV. Aspartate 136 (proton acceptor) is an active-site residue. The activation loop stretch occupies residues 154–183; the sequence is DFGLSALSQQIKDDGLLHTTCGTPNYVAPE. The NAF domain maps to 305–329; sequence EEPEALNAFELISMSAGLNLGNLFD. The tract at residues 335-364 is PPI; it reads KRETRFTSKCPPKEIVRKIEEAAKPLGFDV.

It belongs to the protein kinase superfamily. CAMK Ser/Thr protein kinase family. SNF1 subfamily. The cofactor is Mn(2+).

It catalyses the reaction L-seryl-[protein] + ATP = O-phospho-L-seryl-[protein] + ADP + H(+). The enzyme catalyses L-threonyl-[protein] + ATP = O-phospho-L-threonyl-[protein] + ADP + H(+). Its function is as follows. CIPK serine-threonine protein kinases interact with CBL proteins. Binding of a CBL protein to the regulatory NAF domain of CIPK protein lead to the activation of the kinase in a calcium-dependent manner. This chain is CBL-interacting protein kinase 33 (CIPK33), found in Oryza sativa subsp. japonica (Rice).